The primary structure comprises 92 residues: MTKRTKKAGIVGKYGTRYGASLRKQIKKMEVSQHSKYFCEFCGKYAVKRKAVGIWGCKACGKVKAGGAYTLNTASAVTVRSTIRRLREQTES.

The C4-type zinc-finger motif lies at 39 to 60 (CEFCGKYAVKRKAVGIWGCKAC).

This sequence belongs to the eukaryotic ribosomal protein eL43 family.

This chain is Large ribosomal subunit protein eL43 (RPL37A), found in Gossypium hirsutum (Upland cotton).